Reading from the N-terminus, the 175-residue chain is Sec-independent protein translocase protein TatB (175 aa).

The chain crosses the membrane as a helical span at residues 1 to 21 (MLDLGLSKMALIGVVALVVLG). Disordered stretches follow at residues 96–115 (VSPG…AASG) and 153–175 (VQSG…ARFL). Basic residues predominate over residues 160–175 (VARHRPASLRRPARFL).

The protein belongs to the TatB family. As to quaternary structure, the Tat system comprises two distinct complexes: a TatABC complex, containing multiple copies of TatA, TatB and TatC subunits, and a separate TatA complex, containing only TatA subunits. Substrates initially bind to the TatABC complex, which probably triggers association of the separate TatA complex to form the active translocon.

The protein localises to the cell inner membrane. Its function is as follows. Part of the twin-arginine translocation (Tat) system that transports large folded proteins containing a characteristic twin-arginine motif in their signal peptide across membranes. Together with TatC, TatB is part of a receptor directly interacting with Tat signal peptides. TatB may form an oligomeric binding site that transiently accommodates folded Tat precursor proteins before their translocation. The protein is Sec-independent protein translocase protein TatB of Burkholderia mallei (strain ATCC 23344).